A 486-amino-acid chain; its full sequence is UDP-N-acetylglucosamine pyrophosphorylase (486 aa).

The Substrate binding motif lies at 109–112 (MAGG). UTP is bound by residues 109 to 112 (MAGG), Lys123, Gln199, and Gly226. Asn227 lines the substrate pocket. Asp257 serves as a coordination point for UTP. The short motif at 309–310 (EY) is the Substrate binding element. Lys389 lines the UTP pocket. Lys421 lines the substrate pocket.

This sequence belongs to the UDPGP type 1 family.

It localises to the cytoplasm. It carries out the reaction N-acetyl-alpha-D-glucosamine 1-phosphate + UTP + H(+) = UDP-N-acetyl-alpha-D-glucosamine + diphosphate. It functions in the pathway nucleotide-sugar biosynthesis; UDP-N-acetyl-alpha-D-glucosamine biosynthesis; UDP-N-acetyl-alpha-D-glucosamine from N-acetyl-alpha-D-glucosamine 1-phosphate: step 1/1. This chain is UDP-N-acetylglucosamine pyrophosphorylase (UAP1), found in Candida albicans (Yeast).